Reading from the N-terminus, the 351-residue chain is Histidinol-phosphate aminotransferase (351 aa).

At Lys-213 the chain carries N6-(pyridoxal phosphate)lysine.

The protein belongs to the class-II pyridoxal-phosphate-dependent aminotransferase family. Histidinol-phosphate aminotransferase subfamily. Homodimer. Pyridoxal 5'-phosphate serves as cofactor.

The enzyme catalyses L-histidinol phosphate + 2-oxoglutarate = 3-(imidazol-4-yl)-2-oxopropyl phosphate + L-glutamate. It functions in the pathway amino-acid biosynthesis; L-histidine biosynthesis; L-histidine from 5-phospho-alpha-D-ribose 1-diphosphate: step 7/9. This chain is Histidinol-phosphate aminotransferase, found in Thermoanaerobacter sp. (strain X514).